Here is a 318-residue protein sequence, read N- to C-terminus: MLLKMEEMVPEKKNEMKKTSNFVAGVSKNGEYETAVALEKQEDLKTTSKSLIELEEEKQIKEKQLKSELLKKKLEERPKLDNLEDLQTIINLKKRKRVKKVHVPVVKEPEPEEIIENVDQTTFFKAALDNKMPVIEKYLADGGDPNTCDEYKRTALHRACSEGHTDMVEKLIEAGANIEFKDMLESTALHWTCRGGSVETLKLLLNKGAAINARDKLLSTPLHVAVRTGHYECAEHLIACEADLHARDREGDTPMHDGVRLNRYKMMRLLILYGVDLNIKNSAGKTPMELVMQWQNGAKEIFNGLQSKSYKNSHISKF.

Residues 37–77 adopt a coiled-coil conformation; sequence ALEKQEDLKTTSKSLIELEEEKQIKEKQLKSELLKKKLEER. 6 ANK repeats span residues 118–147, 151–180, 184–213, 217–246, 250–279, and 283–314; these read VDQT…DPNT, YKRT…NIEF, LEST…AINA, LLST…DLHA, EGDT…DLNI, and AGKT…KNSH.

The protein resides in the nucleus. In terms of biological role, may act as a nuclear transcription factor that negatively regulates the expression of cardiac genes. The sequence is that of Ankyrin repeat domain-containing protein 1 (ankrd1) from Xenopus tropicalis (Western clawed frog).